Consider the following 345-residue polypeptide: Uroporphyrinogen decarboxylase (345 aa).

Residues 27-31, phenylalanine 46, aspartate 76, tyrosine 152, serine 207, and histidine 320 each bind substrate; that span reads RQAGR.

Belongs to the uroporphyrinogen decarboxylase family. As to quaternary structure, homodimer.

It localises to the cytoplasm. The enzyme catalyses uroporphyrinogen III + 4 H(+) = coproporphyrinogen III + 4 CO2. It functions in the pathway porphyrin-containing compound metabolism; protoporphyrin-IX biosynthesis; coproporphyrinogen-III from 5-aminolevulinate: step 4/4. Its function is as follows. Catalyzes the decarboxylation of four acetate groups of uroporphyrinogen-III to yield coproporphyrinogen-III. This chain is Uroporphyrinogen decarboxylase, found in Geobacillus sp. (strain WCH70).